A 213-amino-acid polypeptide reads, in one-letter code: Orotate phosphoribosyltransferase (213 aa).

5-phospho-alpha-D-ribose 1-diphosphate is bound at residue Lys-26. 34–35 contacts orotate; the sequence is FF. Residues 72 to 73, Arg-99, Lys-100, Lys-103, His-105, and 124 to 132 contribute to the 5-phospho-alpha-D-ribose 1-diphosphate site; these read YK and DDVITAGTA. The orotate site is built by Thr-128 and Arg-156.

It belongs to the purine/pyrimidine phosphoribosyltransferase family. PyrE subfamily. As to quaternary structure, homodimer. Mg(2+) serves as cofactor.

The catalysed reaction is orotidine 5'-phosphate + diphosphate = orotate + 5-phospho-alpha-D-ribose 1-diphosphate. It functions in the pathway pyrimidine metabolism; UMP biosynthesis via de novo pathway; UMP from orotate: step 1/2. Catalyzes the transfer of a ribosyl phosphate group from 5-phosphoribose 1-diphosphate to orotate, leading to the formation of orotidine monophosphate (OMP). This chain is Orotate phosphoribosyltransferase, found in Vibrio atlanticus (strain LGP32) (Vibrio splendidus (strain Mel32)).